A 394-amino-acid chain; its full sequence is Trans-enoyl reductase fumoC (394 aa).

62–65 provides a ligand contact to NADP(+); it reads VDGK. Residue 152–159 participates in substrate binding; sequence ASLASVGM. NADP(+) contacts are provided by residues 224-227, tyrosine 242, and 289-290; these read SSSS and LD. 309–313 contributes to the substrate binding site; the sequence is TLTQF. 378 to 379 is a binding site for NADP(+); sequence VK.

This sequence belongs to the zinc-containing alcohol dehydrogenase family. As to quaternary structure, monomer.

It participates in secondary metabolite biosynthesis. Functionally, trans-enoyl reductase; part of the gene cluster that mediates the biosynthesis of fumosorinone, a 2-pyridone alkaloid that acts as an inhibitor of protein tyrosine phosphatase 1B which is implicated asa negative regulator of insulin receptor signaling and a potential drug target for the treatment of type II diabetes and other associated metabolic syndromes. The polyketide-amino acid backbone of fumosorinone is first assembled by the PKS-NRPS hybrid fumoS. The PKS modules condense one acetyl-CoA starter unit with 7 malonyl-CoA units, programmed C-methylations occurring after the first 3 and the sixth extensions, and cycles of full reduction occurring after the first 2 extensions. Because fumoS lacks a designated enoyl reductase (ER) domain, the required activity is provided the enoyl reductase fumoC. Upon formation of the polyketide backbone on the thiotemplate, the polyketide is transferred to the NRPS module and linked to tyrosine to produce the acyltetramic acid intermediate called prefumosorinone A. The cytochrome P450 monooxygenase fumoA then probably catalyzes an unprecedented oxidative ring expansion of prefumosorinone A to form prefumosorinone B which contains the 2-pyridone core of fumosorinone. The cytochrome P450 monooxygenase fumoB might hydroxylate the nitrogen of prefumosorinone B, but not the acyltetramic acid prefumosorinone A, to form fumosorinone. The chain is Trans-enoyl reductase fumoC from Cordyceps fumosorosea (strain ARSEF 2679) (Isaria fumosorosea).